Consider the following 519-residue polypeptide: NADH-quinone oxidoreductase subunit C/D (519 aa).

An NADH dehydrogenase I subunit C region spans residues 1-138 (MSERIEIPAE…TNEEPVDTTQ (138 aa)). Residues 159-519 (DEYIINIGPQ…VDYVVPDIDR (361 aa)) are NADH dehydrogenase I subunit D.

In the N-terminal section; belongs to the complex I 30 kDa subunit family. It in the C-terminal section; belongs to the complex I 49 kDa subunit family. NDH-1 is composed of 13 different subunits. Subunits NuoB, CD, E, F, and G constitute the peripheral sector of the complex.

It is found in the cell inner membrane. The catalysed reaction is a quinone + NADH + 5 H(+)(in) = a quinol + NAD(+) + 4 H(+)(out). Functionally, NDH-1 shuttles electrons from NADH, via FMN and iron-sulfur (Fe-S) centers, to quinones in the respiratory chain. The immediate electron acceptor for the enzyme in this species is believed to be a menaquinone. Couples the redox reaction to proton translocation (for every two electrons transferred, four hydrogen ions are translocated across the cytoplasmic membrane), and thus conserves the redox energy in a proton gradient. In Phocaeicola vulgatus (strain ATCC 8482 / DSM 1447 / JCM 5826 / CCUG 4940 / NBRC 14291 / NCTC 11154) (Bacteroides vulgatus), this protein is NADH-quinone oxidoreductase subunit C/D.